A 332-amino-acid chain; its full sequence is Probable farnesyl diphosphate synthase (332 aa).

Isopentenyl diphosphate is bound by residues Lys-75, Arg-78, and His-107. Residues Asp-114 and Asp-120 each coordinate Mg(2+). Residue Arg-125 coordinates (2E)-geranyl diphosphate. Arg-126 provides a ligand contact to isopentenyl diphosphate. (2E)-geranyl diphosphate-binding residues include Lys-208, Gln-250, and Lys-267.

It belongs to the FPP/GGPP synthase family. It depends on Mg(2+) as a cofactor.

Its subcellular location is the cytoplasm. It carries out the reaction isopentenyl diphosphate + (2E)-geranyl diphosphate = (2E,6E)-farnesyl diphosphate + diphosphate. The protein is Probable farnesyl diphosphate synthase of Sinorhizobium fredii (strain NBRC 101917 / NGR234).